The following is a 499-amino-acid chain: Maturase K (499 aa).

The protein belongs to the intron maturase 2 family. MatK subfamily.

The protein resides in the plastid. The protein localises to the chloroplast. Usually encoded in the trnK tRNA gene intron. Probably assists in splicing its own and other chloroplast group II introns. This Gymnocladus chinensis (Soap tree) protein is Maturase K.